The following is an 83-amino-acid chain: MTEPSNADIAVMSFEDALKQLEKIVDDLERGDVPLEESIRIYERGEALKKHCDTLLKSAEDKVEKIRIGRDGQPVGTEPLDPE.

This sequence belongs to the XseB family. In terms of assembly, heterooligomer composed of large and small subunits.

The protein localises to the cytoplasm. It carries out the reaction Exonucleolytic cleavage in either 5'- to 3'- or 3'- to 5'-direction to yield nucleoside 5'-phosphates.. Bidirectionally degrades single-stranded DNA into large acid-insoluble oligonucleotides, which are then degraded further into small acid-soluble oligonucleotides. The protein is Exodeoxyribonuclease 7 small subunit of Brucella melitensis biotype 1 (strain ATCC 23456 / CCUG 17765 / NCTC 10094 / 16M).